The chain runs to 365 residues: Cobalt-precorrin-5B C(1)-methyltransferase (365 aa).

This sequence belongs to the CbiD family.

It catalyses the reaction Co-precorrin-5B + S-adenosyl-L-methionine = Co-precorrin-6A + S-adenosyl-L-homocysteine. It functions in the pathway cofactor biosynthesis; adenosylcobalamin biosynthesis; cob(II)yrinate a,c-diamide from sirohydrochlorin (anaerobic route): step 6/10. Functionally, catalyzes the methylation of C-1 in cobalt-precorrin-5B to form cobalt-precorrin-6A. The sequence is that of Cobalt-precorrin-5B C(1)-methyltransferase from Pseudomonas fluorescens (strain Pf0-1).